A 91-amino-acid chain; its full sequence is Protein LURE 1.3 (91 aa).

The N-terminal stretch at 1 to 20 (MKLPFIFLITLLIFVSSCTS) is a signal peptide. The N-linked (GlcNAc...) asparagine glycan is linked to asparagine 24. 3 disulfide bridges follow: cysteine 59/cysteine 76, cysteine 62/cysteine 83, and cysteine 66/cysteine 85. Positions 68–88 (RRGKYIRTCSFERKLCRCSIS) are PRK6 binding.

It belongs to the DEFL family. In terms of assembly, binds to PRK6 LRRs. Expressed in the pistil. Detected exclusively in the synergid cells.

Its subcellular location is the secreted. In terms of biological role, pollen tube attractants guiding pollen tubes to the ovular micropyle. Attracts pollen tubes from both A.thaliana and A.lyrata. This is Protein LURE 1.3 from Arabidopsis thaliana (Mouse-ear cress).